The chain runs to 383 residues: Acetylornithine deacetylase (383 aa).

H80 contributes to the Zn(2+) binding site. The active site involves D82. Residue D112 coordinates Zn(2+). The active site involves E144. Positions 145, 169, and 355 each coordinate Zn(2+).

Belongs to the peptidase M20A family. ArgE subfamily. In terms of assembly, homodimer. The cofactor is Zn(2+). Requires Co(2+) as cofactor. Glutathione serves as cofactor.

It localises to the cytoplasm. The enzyme catalyses N(2)-acetyl-L-ornithine + H2O = L-ornithine + acetate. The protein operates within amino-acid biosynthesis; L-arginine biosynthesis; L-ornithine from N(2)-acetyl-L-ornithine (linear): step 1/1. In terms of biological role, catalyzes the hydrolysis of the amide bond of N(2)-acetylated L-amino acids. Cleaves the acetyl group from N-acetyl-L-ornithine to form L-ornithine, an intermediate in L-arginine biosynthesis pathway, and a branchpoint in the synthesis of polyamines. The chain is Acetylornithine deacetylase from Salmonella typhi.